We begin with the raw amino-acid sequence, 297 residues long: Transmembrane protein 178A (297 aa).

A signal peptide spans 1–25; sequence MEPRALVTALSLGLSLCSLGLLVTA. The Extracellular portion of the chain corresponds to 26 to 179; it reads IFTDHWYETD…LLHLRRITAG (154 aa). The segment covering 41–57 has biased composition (basic and acidic residues); the sequence is ESCERSRAGADPPDQKN. The interval 41 to 84 is disordered; that stretch reads ESCERSRAGADPPDQKNRLMPLSHLPLRDSPPLGRRLLPGGPGR. The segment covering 68–79 has biased composition (low complexity); sequence RDSPPLGRRLLP. An N-linked (GlcNAc...) asparagine glycan is attached at asparagine 158. A helical membrane pass occupies residues 180–200; it reads FLGMAVAVLLCGCIVATVSFF. At 201-208 the chain is on the cytoplasmic side; that stretch reads WEESLTQH. The chain crosses the membrane as a helical span at residues 209–229; that stretch reads VAGLLFLMTGIFCTISLCTYA. Over 230–257 the chain is Extracellular; that stretch reads ASISYDLNRLPKLIYSLPADVEHGYSWS. Residues 258 to 278 form a helical membrane-spanning segment; sequence IFCAWCSLGFIVAAGGLCIAY. The Cytoplasmic portion of the chain corresponds to 279-297; sequence PFISRTKIAQLKSGRDSTV.

The protein belongs to the TMEM178 family. As to quaternary structure, interacts with STIM1.

It is found in the endoplasmic reticulum membrane. Its function is as follows. Acts as a negative regulator of osteoclast differentiation in basal and inflammatory conditions by regulating TNFSF11-induced Ca (2+) fluxes, thereby controlling the induction of NFATC1. The polypeptide is Transmembrane protein 178A (TMEM178A) (Homo sapiens (Human)).